The sequence spans 254 residues: MGLIKNTVHYCCVSRDNQILYSYNGGDQTNESLAALCLEKSPPFHTWYFETIGKRRFGFLIGDGFVYFAIVDEVLKRSSVLKFLEHLRDEFKKAARENSRGSFTAMIGSINVEDQLVPVVTRLIASLERVAESSSNNELKSSNLGEQSEGSNSTKAPLLGRLSKQEKKKGKDHVIELEEHRKSNDRGNITDDSAGAGTSLEKECVSSSGRSVTQSFEWKWRRLVQIVLAIDAAICLTLFGIWLAICRGIECTRS.

Residues 12 to 113 (CVSRDNQILY…TAMIGSINVE (102 aa)) enclose the Longin domain. The disordered stretch occupies residues 138-173 (ELKSSNLGEQSEGSNSTKAPLLGRLSKQEKKKGKDH). Residues 145 to 155 (GEQSEGSNSTK) are compositionally biased toward polar residues. The chain crosses the membrane as a helical; Anchor for type IV membrane protein span at residues 226–246 (IVLAIDAAICLTLFGIWLAIC).

The protein belongs to the synaptobrevin family.

The protein localises to the membrane. Functionally, non-SNARE longin protein involved in membrane-trafficking machinery. This is Phytolongin Phyl1.1 from Arabidopsis thaliana (Mouse-ear cress).